A 500-amino-acid chain; its full sequence is Lysine--tRNA ligase (500 aa).

2 residues coordinate Mg(2+): glutamate 410 and glutamate 417.

The protein belongs to the class-II aminoacyl-tRNA synthetase family. In terms of assembly, homodimer. It depends on Mg(2+) as a cofactor.

The protein resides in the cytoplasm. The enzyme catalyses tRNA(Lys) + L-lysine + ATP = L-lysyl-tRNA(Lys) + AMP + diphosphate. This is Lysine--tRNA ligase from Shewanella oneidensis (strain ATCC 700550 / JCM 31522 / CIP 106686 / LMG 19005 / NCIMB 14063 / MR-1).